The chain runs to 396 residues: 1-deoxy-D-xylulose 5-phosphate reductoisomerase (396 aa).

Positions 15, 16, 17, 18, 41, and 129 each coordinate NADPH. A 1-deoxy-D-xylulose 5-phosphate-binding site is contributed by K130. E131 is a binding site for NADPH. D155 lines the Mn(2+) pocket. 4 residues coordinate 1-deoxy-D-xylulose 5-phosphate: S156, E157, S182, and H205. E157 lines the Mn(2+) pocket. G211 lines the NADPH pocket. The 1-deoxy-D-xylulose 5-phosphate site is built by S218, N223, K224, and E227. E227 provides a ligand contact to Mn(2+).

Belongs to the DXR family. Mg(2+) is required as a cofactor. Requires Mn(2+) as cofactor.

The enzyme catalyses 2-C-methyl-D-erythritol 4-phosphate + NADP(+) = 1-deoxy-D-xylulose 5-phosphate + NADPH + H(+). It functions in the pathway isoprenoid biosynthesis; isopentenyl diphosphate biosynthesis via DXP pathway; isopentenyl diphosphate from 1-deoxy-D-xylulose 5-phosphate: step 1/6. In terms of biological role, catalyzes the NADPH-dependent rearrangement and reduction of 1-deoxy-D-xylulose-5-phosphate (DXP) to 2-C-methyl-D-erythritol 4-phosphate (MEP). This chain is 1-deoxy-D-xylulose 5-phosphate reductoisomerase, found in Xanthomonas campestris pv. campestris (strain 8004).